The chain runs to 258 residues: UPF0246 protein YaaA (258 aa).

Belongs to the UPF0246 family.

The chain is UPF0246 protein YaaA from Escherichia coli O17:K52:H18 (strain UMN026 / ExPEC).